A 249-amino-acid polypeptide reads, in one-letter code: Imidazole glycerol phosphate synthase subunit HisF (249 aa).

Residues Asp-11 and Asp-130 contribute to the active site.

Belongs to the HisA/HisF family. In terms of assembly, heterodimer of HisH and HisF.

It is found in the cytoplasm. The enzyme catalyses 5-[(5-phospho-1-deoxy-D-ribulos-1-ylimino)methylamino]-1-(5-phospho-beta-D-ribosyl)imidazole-4-carboxamide + L-glutamine = D-erythro-1-(imidazol-4-yl)glycerol 3-phosphate + 5-amino-1-(5-phospho-beta-D-ribosyl)imidazole-4-carboxamide + L-glutamate + H(+). Its pathway is amino-acid biosynthesis; L-histidine biosynthesis; L-histidine from 5-phospho-alpha-D-ribose 1-diphosphate: step 5/9. IGPS catalyzes the conversion of PRFAR and glutamine to IGP, AICAR and glutamate. The HisF subunit catalyzes the cyclization activity that produces IGP and AICAR from PRFAR using the ammonia provided by the HisH subunit. This chain is Imidazole glycerol phosphate synthase subunit HisF, found in Exiguobacterium sibiricum (strain DSM 17290 / CCUG 55495 / CIP 109462 / JCM 13490 / 255-15).